Here is a 245-residue protein sequence, read N- to C-terminus: 2,3-bisphosphoglycerate-dependent phosphoglycerate mutase (245 aa).

Substrate is bound by residues 9–16 (RHGESEWN), 22–23 (TG), Arg61, 88–91 (ERHY), Lys99, 115–116 (RR), and 181–182 (GN). His10 serves as the catalytic Tele-phosphohistidine intermediate. Glu88 (proton donor/acceptor) is an active-site residue.

It belongs to the phosphoglycerate mutase family. BPG-dependent PGAM subfamily.

It carries out the reaction (2R)-2-phosphoglycerate = (2R)-3-phosphoglycerate. It functions in the pathway carbohydrate degradation; glycolysis; pyruvate from D-glyceraldehyde 3-phosphate: step 3/5. Catalyzes the interconversion of 2-phosphoglycerate and 3-phosphoglycerate. The chain is 2,3-bisphosphoglycerate-dependent phosphoglycerate mutase from Nocardia farcinica (strain IFM 10152).